The primary structure comprises 262 residues: Mediator of RNA polymerase II transcription subunit 8 (262 aa).

A coiled-coil region spans residues 168 to 211; it reads LEEKEMGVKNVITGLKRQLDEGDEEDEEEEEEEEDMQGEEMEVV. The tract at residues 183-206 is disordered; sequence KRQLDEGDEEDEEEEEEEEDMQGE. Residues 188 to 206 show a composition bias toward acidic residues; the sequence is EGDEEDEEEEEEEEDMQGE.

Belongs to the Mediator complex subunit 8 family. Component of the Mediator complex.

It is found in the nucleus. Functionally, component of the Mediator complex, a coactivator involved in the regulated transcription of nearly all RNA polymerase II-dependent genes. Mediator functions as a bridge to convey information from gene-specific regulatory proteins to the basal RNA polymerase II transcription machinery. Mediator is recruited to promoters by direct interactions with regulatory proteins and serves as a scaffold for the assembly of a functional preinitiation complex with RNA polymerase II and the general transcription factors. The chain is Mediator of RNA polymerase II transcription subunit 8 (MED8) from Coccidioides immitis (strain RS) (Valley fever fungus).